The following is a 488-amino-acid chain: Stromelysin-3 (488 aa).

Positions 1–31 (MAPAAWLRSAAARALLPPMLLLLLQPPPLLA) are cleaved as a signal peptide. Positions 32–97 (RALPPDAHHL…GLSARNRQKR (66 aa)) are cleaved as a propeptide — activation peptide. A disordered region spans residues 41–93 (LHAERRGPQPWHAALPSSPAPAPATQEAPRPASSLRPPRCGVPDPSDGLSARN). Positions 50–79 (PWHAALPSSPAPAPATQEAPRPASSLRPPR) are enriched in low complexity. The Cysteine switch motif lies at 78 to 85 (PRCGVPDP). Residues Cys80 and Asp166 each contribute to the Zn(2+) site. Ca(2+) is bound by residues Asp171, Gly172, Gly174, and Ile176. His179, His192, and His215 together coordinate Zn(2+). Glu216 is an active-site residue. The Zn(2+) site is built by His219 and His225. 4 Hemopexin repeats span residues 291-339 (PDAC…WQGL), 340-382 (PSPV…ELGL), 384-432 (RFPV…WRGV), and 433-480 (PSEI…FFGC). Cys294 and Cys480 are oxidised to a cystine.

Belongs to the peptidase M10A family. Requires Ca(2+) as cofactor. The cofactor is Zn(2+). Post-translationally, the precursor is cleaved by a furin endopeptidase. Specifically expressed in stromal cells of breast carcinomas.

It localises to the secreted. Its subcellular location is the extracellular space. The protein localises to the extracellular matrix. In terms of biological role, may play an important role in the progression of epithelial malignancies. In Homo sapiens (Human), this protein is Stromelysin-3 (MMP11).